We begin with the raw amino-acid sequence, 378 residues long: Holliday junction branch migration complex subunit RuvB 1 (378 aa).

The segment covering M1–N12 has biased composition (polar residues). The disordered stretch occupies residues M1 to R62. The interval A13–Y222 is large ATPase domain (RuvB-L). Residues L61, R62, G103, K106, T107, T108, E169 to F171, R212, Y222, and R259 contribute to the ATP site. T107 is a Mg(2+) binding site. Residues E223–Q293 form a small ATPAse domain (RuvB-S) region. The segment at P296 to S378 is head domain (RuvB-H). Residues R351 and R356 each coordinate DNA.

The protein belongs to the RuvB family. In terms of assembly, homohexamer. Forms an RuvA(8)-RuvB(12)-Holliday junction (HJ) complex. HJ DNA is sandwiched between 2 RuvA tetramers; dsDNA enters through RuvA and exits via RuvB. An RuvB hexamer assembles on each DNA strand where it exits the tetramer. Each RuvB hexamer is contacted by two RuvA subunits (via domain III) on 2 adjacent RuvB subunits; this complex drives branch migration. In the full resolvosome a probable DNA-RuvA(4)-RuvB(12)-RuvC(2) complex forms which resolves the HJ.

It localises to the cytoplasm. The enzyme catalyses ATP + H2O = ADP + phosphate + H(+). Functionally, the RuvA-RuvB-RuvC complex processes Holliday junction (HJ) DNA during genetic recombination and DNA repair, while the RuvA-RuvB complex plays an important role in the rescue of blocked DNA replication forks via replication fork reversal (RFR). RuvA specifically binds to HJ cruciform DNA, conferring on it an open structure. The RuvB hexamer acts as an ATP-dependent pump, pulling dsDNA into and through the RuvAB complex. RuvB forms 2 homohexamers on either side of HJ DNA bound by 1 or 2 RuvA tetramers; 4 subunits per hexamer contact DNA at a time. Coordinated motions by a converter formed by DNA-disengaged RuvB subunits stimulates ATP hydrolysis and nucleotide exchange. Immobilization of the converter enables RuvB to convert the ATP-contained energy into a lever motion, pulling 2 nucleotides of DNA out of the RuvA tetramer per ATP hydrolyzed, thus driving DNA branch migration. The RuvB motors rotate together with the DNA substrate, which together with the progressing nucleotide cycle form the mechanistic basis for DNA recombination by continuous HJ branch migration. Branch migration allows RuvC to scan DNA until it finds its consensus sequence, where it cleaves and resolves cruciform DNA. The polypeptide is Holliday junction branch migration complex subunit RuvB 1 (Synechococcus sp. (strain JA-3-3Ab) (Cyanobacteria bacterium Yellowstone A-Prime)).